We begin with the raw amino-acid sequence, 537 residues long: Phosphoenolpyruvate carboxykinase (ATP) (537 aa).

Residues Arg-61, Tyr-195, and Lys-201 each contribute to the substrate site. Residues Lys-201, His-220, and Gly-236–Thr-244 contribute to the ATP site. Lys-201 and His-220 together coordinate Mn(2+). Residue Asp-257 coordinates Mn(2+). Residues Glu-285, Arg-323, and Thr-448 each contribute to the ATP site. Arg-323 lines the substrate pocket.

It belongs to the phosphoenolpyruvate carboxykinase (ATP) family. Requires Mn(2+) as cofactor.

It is found in the cytoplasm. It catalyses the reaction oxaloacetate + ATP = phosphoenolpyruvate + ADP + CO2. It participates in carbohydrate biosynthesis; gluconeogenesis. In terms of biological role, involved in the gluconeogenesis. Catalyzes the conversion of oxaloacetate (OAA) to phosphoenolpyruvate (PEP) through direct phosphoryl transfer between the nucleoside triphosphate and OAA. The protein is Phosphoenolpyruvate carboxykinase (ATP) of Rhodopseudomonas palustris (strain HaA2).